Reading from the N-terminus, the 131-residue chain is DNA-binding protein inhibitor ID-4 (131 aa).

Residues 36–88 (ARYKMEEEETLCLQYDMNDCYSRLKRLVPTIPPNKKVSKVEILQHVIDYILDL) enclose the bHLH domain.

In terms of assembly, heterodimer with other HLH proteins. During embryonic development, expressed in a number of neural tissues, including Rohon-Beard neurons, olfactory placode, eye primordia, and the trigeminal ganglia. Also expressed in other organs including the pronephros and liver primordium. Pronephric development begins by stage 25 and increases during tailbud stages. Expressed in both the tubules and the duct. As embryogenesis progresses, expressed in the migrating melanocytes and lateral line structures.

The protein resides in the nucleus. Functionally, transcriptional regulator (lacking a basic DNA binding domain) which negatively regulates the basic helix-loop-helix (bHLH) transcription factors by forming heterodimers and inhibiting their DNA binding and transcriptional activity. Inhibits the activity of both neurogenic (neurog1/neurogenin, neurod1/neuroD) and myogenic (myod1/myoD) bHLH factors. The sequence is that of DNA-binding protein inhibitor ID-4 from Xenopus laevis (African clawed frog).